A 412-amino-acid polypeptide reads, in one-letter code: Fringe glycosyltransferase (412 aa).

Residues 1–15 lie on the Cytoplasmic side of the membrane; it reads MMSLTVLSPPQRFKR. The helical; Signal-anchor for type II membrane protein transmembrane segment at 16 to 34 threads the bilayer; the sequence is ILQAMMLAVAVVYMTLLLY. The Lumenal segment spans residues 35-412; it reads QSAYGYPGIQ…FPYFSFCPPR (378 aa). Arg164 is a substrate binding site. 2 disulfide bridges follow: Cys204/Cys215 and Cys233/Cys297. Asp237 provides a ligand contact to substrate. Asp238 provides a ligand contact to Mn(2+). Residue Asp327 is part of the active site. A Mn(2+)-binding site is contributed by His351. Cys400 and Cys409 are joined by a disulfide.

Belongs to the glycosyltransferase 31 family. It depends on Mn(2+) as a cofactor. As to expression, expressed in dorsal cells.

It localises to the golgi apparatus membrane. The catalysed reaction is 3-O-(alpha-L-fucosyl)-L-threonyl-[EGF-like domain protein] + UDP-N-acetyl-alpha-D-glucosamine = 3-O-(N-acetyl-beta-D-glucosaminyl-(1-&gt;3)-alpha-L-fucosyl)-L-threonyl-[EGF-like domain protein] + UDP + H(+). It carries out the reaction 3-O-(alpha-L-fucosyl)-L-seryl-[EGF-like domain protein] + UDP-N-acetyl-alpha-D-glucosamine = 3-O-(N-acetyl-beta-D-glucosaminyl-(1-&gt;3)-alpha-L-fucosyl)-L-seryl-[EGF-like domain protein] + UDP + H(+). Glycosyltransferase involved in the elongation of O-linked ligands to activate Notch signaling. Possesses fucose-specific beta-1,3-N-acetylglucosaminyltransferase activity; extends the O-linked fucose on the Notch EGF repeats. Boundary-specific cell-signaling molecule that is responsible for dorsal-ventral cell interactions during wing development. The sequence is that of Fringe glycosyltransferase (fng) from Drosophila melanogaster (Fruit fly).